The following is a 647-amino-acid chain: LIM domain kinase 1 (647 aa).

2 LIM zinc-binding domains span residues 25–75 (CASC…CKKD) and 84–137 (CHGC…CGQC). Positions 165 to 258 (LVSIPASAHG…LLQLTLEHDP (94 aa)) constitute a PDZ domain. Phosphoserine is present on S210. T229 is modified (phosphothreonine). Positions 256-319 (HDPHDSLGHG…SPASQRKDLG (64 aa)) are disordered. Low complexity predominate over residues 266 to 277 (PVSDPSPLSSPV). 2 stretches are compositionally biased toward polar residues: residues 278–289 (HTPSGQAASSAR) and 298–313 (SIDT…SPAS). Residues S298, S302, S307, and S310 each carry the phosphoserine modification. A Phosphoserine; by MAPKAPK2 modification is found at S323. S337 bears the Phosphoserine mark. One can recognise a Protein kinase domain in the interval 339–604 (LIHGEVLGKG…PSFVKLEQWL (266 aa)). Residues 345–353 (LGKGCFGQA) and K368 contribute to the ATP site. D460 is an active-site residue. T508 is subject to Phosphothreonine; by ROCK1.

This sequence belongs to the protein kinase superfamily. TKL Ser/Thr protein kinase family. In terms of assembly, self-associates to form homodimers. Interacts with HSP90AA1; this interaction promotes LIMK1 dimerization and subsequent transphosphorylation. Interacts with CDKN1C. Interacts (via LIM domain) with the cytoplasmic domain of NRG1. Interacts with NISCH. Interacts with SSH1. Interacts with RLIM and RNF6. Interacts (via LIM zinc-binding domains) with FAM89B/LRAP25 (via LRR repeat). Forms a tripartite complex with CDC42BPA, CDC42BPB and FAM89B/LRAP25. Autophosphorylated. Phosphorylated on Thr-508 by ROCK1 and PAK1, resulting in activation. Phosphorylated by PAK4 which increases the ability of LIMK1 to phosphorylate cofilin. Phosphorylated at Ser-323 by MAPKAPK2 during activation of VEGFA-induced signaling, which results in activation of LIMK1 and promotion of actin reorganization, cell migration, and tubule formation of endothelial cells. Dephosphorylated and inactivated by SSH1. Phosphorylated by CDC42BP. In terms of processing, ubiquitinated. 'Lys-48'-linked polyubiquitination by RNF6 leads to proteasomal degradation through the 26S proteasome, modulating LIMK1 levels in the growth cone and its effect on axonal outgrowth. Also polyubiquitinated by RLIM. In terms of tissue distribution, highest expression in the nervous system, particularly in the spinal cord and the cranial nerve and dorsal root ganglia.

It localises to the cytoplasm. Its subcellular location is the nucleus. The protein localises to the cytoskeleton. The protein resides in the cell projection. It is found in the lamellipodium. The enzyme catalyses L-seryl-[protein] + ATP = O-phospho-L-seryl-[protein] + ADP + H(+). It catalyses the reaction L-threonyl-[protein] + ATP = O-phospho-L-threonyl-[protein] + ADP + H(+). Its function is as follows. Serine/threonine-protein kinase that plays an essential role in the regulation of actin filament dynamics. Acts downstream of several Rho family GTPase signal transduction pathways. Activated by upstream kinases including ROCK1, PAK1 and PAK4, which phosphorylate LIMK1 on a threonine residue located in its activation loop. LIMK1 subsequently phosphorylates and inactivates the actin binding/depolymerizing factors cofilin-1/CFL1, cofilin-2/CFL2 and destrin/DSTN, thereby preventing the cleavage of filamentous actin (F-actin), and stabilizing the actin cytoskeleton. In this way LIMK1 regulates several actin-dependent biological processes including cell motility, cell cycle progression, and differentiation. Phosphorylates TPPP on serine residues, thereby promoting microtubule disassembly. Stimulates axonal outgrowth and may be involved in brain development. The sequence is that of LIM domain kinase 1 (Limk1) from Mus musculus (Mouse).